The sequence spans 361 residues: tRNA/tmRNA (uracil-C(5))-methyltransferase (361 aa).

Positions 185, 213, 218, 234, and 294 each coordinate S-adenosyl-L-methionine. Catalysis depends on Cys-319, which acts as the Nucleophile. Glu-353 acts as the Proton acceptor in catalysis.

The protein belongs to the class I-like SAM-binding methyltransferase superfamily. RNA M5U methyltransferase family. TrmA subfamily.

The enzyme catalyses uridine(54) in tRNA + S-adenosyl-L-methionine = 5-methyluridine(54) in tRNA + S-adenosyl-L-homocysteine + H(+). It catalyses the reaction uridine(341) in tmRNA + S-adenosyl-L-methionine = 5-methyluridine(341) in tmRNA + S-adenosyl-L-homocysteine + H(+). In terms of biological role, dual-specificity methyltransferase that catalyzes the formation of 5-methyluridine at position 54 (m5U54) in all tRNAs, and that of position 341 (m5U341) in tmRNA (transfer-mRNA). This chain is tRNA/tmRNA (uracil-C(5))-methyltransferase, found in Pseudomonas entomophila (strain L48).